Here is a 138-residue protein sequence, read N- to C-terminus: Cytosolic calcium-binding protein 2 (138 aa).

Positions 31 to 41 (TEVTQQPEESV) are enriched in low complexity. The tract at residues 31–122 (TEVTQQPEES…KKTEVVEEKQ (92 aa)) is disordered. A run of 6 repeats spans residues 62–68 (VEEAEKK), 71–75 (ETEKK), 92–98 (VEEEEKK), 109–114 (VEEEKK), 118–122 (VEEKQ), and 131–135 (VAVEK). Residues 62-135 (VEEAEKKDEE…AAAEEVAVEK (74 aa)) are 6 X 5 AA approximate repeats of V-E-E-K-K. The segment covering 64–85 (EAEKKDEETEKKTEEKDEKTEV) has biased composition (basic and acidic residues). Residues 110-122 (EEEKKTEVVEEKQ) are compositionally biased toward basic and acidic residues.

In terms of tissue distribution, predominantly expressed in roots (e.g. in endodermis in the stele) and stems, to a lower extent in shoots, flowers and siliques, and, at low levels, in leaves.

It is found in the cytoplasm. It localises to the cytosol. Functionally, binds calcium Ca(2+) and may act as a signal mediator to buffer Ca(2+). The polypeptide is Cytosolic calcium-binding protein 2 (Arabidopsis thaliana (Mouse-ear cress)).